Reading from the N-terminus, the 316-residue chain is Probable 5-dehydro-4-deoxyglucarate dehydratase (316 aa).

It belongs to the DapA family.

The catalysed reaction is 5-dehydro-4-deoxy-D-glucarate + H(+) = 2,5-dioxopentanoate + CO2 + H2O. It functions in the pathway carbohydrate acid metabolism; D-glucarate degradation; 2,5-dioxopentanoate from D-glucarate: step 2/2. The protein is Probable 5-dehydro-4-deoxyglucarate dehydratase of Corynebacterium glutamicum (strain R).